The chain runs to 236 residues: Uridylate kinase (236 aa).

ATP is bound at residue 12–15 (KLSG). The segment at 20 to 25 (GEKGFG) is involved in allosteric activation by GTP. Residue glycine 54 coordinates UMP. ATP is bound by residues glycine 55 and arginine 59. Residues aspartate 72 and 133 to 140 (TGNPYFST) contribute to the UMP site. Positions 161, 166, and 169 each coordinate ATP.

It belongs to the UMP kinase family. In terms of assembly, homohexamer.

It is found in the cytoplasm. The catalysed reaction is UMP + ATP = UDP + ADP. The protein operates within pyrimidine metabolism; CTP biosynthesis via de novo pathway; UDP from UMP (UMPK route): step 1/1. With respect to regulation, allosterically activated by GTP. Inhibited by UTP. Catalyzes the reversible phosphorylation of UMP to UDP. This is Uridylate kinase from Alkaliphilus metalliredigens (strain QYMF).